The primary structure comprises 564 residues: Acetylcholine receptor subunit alpha-type deg-3 (564 aa).

The N-terminal stretch at 1-20 (MTLKIRTIIILFCVISVTTT) is a signal peptide. Residues 21–268 (SQSLNATLKT…SLVIQRKPLY (248 aa)) are Extracellular-facing. Residues asparagine 25, asparagine 37, asparagine 125, and asparagine 198 are each glycosylated (N-linked (GlcNAc...) asparagine). 2 disulfide bridges follow: cysteine 185–cysteine 199 and cysteine 248–cysteine 249. Transmembrane regions (helical) follow at residues 269–289 (YLVN…TGFF), 302–319 (INLG…MLMV), and 329–353 (FVPL…LTSV). The Cytoplasmic segment spans residues 354–526 (VLSVQGRRQY…WEFLATVLDR (173 aa)). Residues 527–547 (FLLIVFVGAVVIVTAGLILVG) traverse the membrane as a helical segment.

This sequence belongs to the ligand-gated ion channel (TC 1.A.9) family. Acetylcholine receptor (TC 1.A.9.1) subfamily. The functional receptor is a heteromer of deg-3 and des-2. Interacts with ric-3; which is required for proper receptor folding.

Its subcellular location is the postsynaptic cell membrane. It is found in the cell membrane. Its function is as follows. Subunit of the non-synaptic neuronal acetylcholine receptor, which may play a role in chemotaxis towards choline. After binding choline or acetylcholine, the AChR responds by an extensive change in conformation that affects all subunits and leads to opening of an ion-conducting channel across the plasma membrane. The protein is Acetylcholine receptor subunit alpha-type deg-3 (deg-3) of Caenorhabditis elegans.